We begin with the raw amino-acid sequence, 103 residues long: Cell division protein CrgA (103 aa).

The next 2 helical transmembrane spans lie at 49–69 (FVPLFCALMIIGLIWCVVYYL) and 80–100 (IGAWNLGIGFALIMIGFLMTM).

It belongs to the CrgA family.

Its subcellular location is the cell membrane. In terms of biological role, involved in cell division. The protein is Cell division protein CrgA of Bifidobacterium longum (strain NCC 2705).